Here is a 284-residue protein sequence, read N- to C-terminus: tRNA-cytidine(32) 2-sulfurtransferase (284 aa).

Positions 44 to 49 (SGGKDS) match the PP-loop motif motif. [4Fe-4S] cluster is bound by residues C119, C122, and C210.

Belongs to the TtcA family. In terms of assembly, homodimer. The cofactor is Mg(2+). [4Fe-4S] cluster is required as a cofactor.

It localises to the cytoplasm. It carries out the reaction cytidine(32) in tRNA + S-sulfanyl-L-cysteinyl-[cysteine desulfurase] + AH2 + ATP = 2-thiocytidine(32) in tRNA + L-cysteinyl-[cysteine desulfurase] + A + AMP + diphosphate + H(+). It functions in the pathway tRNA modification. Its function is as follows. Catalyzes the ATP-dependent 2-thiolation of cytidine in position 32 of tRNA, to form 2-thiocytidine (s(2)C32). The sulfur atoms are provided by the cysteine/cysteine desulfurase (IscS) system. The sequence is that of tRNA-cytidine(32) 2-sulfurtransferase from Chromohalobacter salexigens (strain ATCC BAA-138 / DSM 3043 / CIP 106854 / NCIMB 13768 / 1H11).